A 234-amino-acid polypeptide reads, in one-letter code: Probable RNA/DNA demethylase ALKBH6 (234 aa).

Positions 96-222 (TANHVLVNEY…RVSLTIRHVP (127 aa)) constitute a Fe2OG dioxygenase domain. 2 residues coordinate 2-oxoglutarate: asparagine 103 and tyrosine 105. Histidine 114, aspartate 116, and histidine 180 together coordinate Fe cation. 2 residues coordinate 2-oxoglutarate: arginine 213 and serine 215.

Belongs to the alkB family. Requires Fe(2+) as cofactor.

Its subcellular location is the cytoplasm. The protein resides in the nucleus. Its function is as follows. Probable Fe(2+)/2-oxoglutarate-dependent dioxygenase involved in oxidative demethylation of nucleic acids. Binds nucleic acids with a preference for ssDNA or ssRNA to other types of DNAs. May play a role in nucleic acid damage repair. The protein is Probable RNA/DNA demethylase ALKBH6 (alkbh6) of Danio rerio (Zebrafish).